An 807-amino-acid chain; its full sequence is MLRFPTCFPSFRVVGEKQLPQEIIFLAWSPKRDLIALANTTGEVLLHRLASFHRVWSFPPNESTGKEVTCLAWRPDGKLLAFALADTKKIILCDVEKPESLHSFSVEAPVSCMHWTEVTVESSVLTSFYNAEDESNLLLPKLPTLPKNYNSTSKIFSEENSDEIIKLLGDVRLNILVLGGSSGFIELYAYGMFKIARVTGIAGTCIALCLSSDLKSLSVVTEVSSGGESEVSYFQLETNLLYSFLPEVTRMARKFTHISALLQYINLSLTCMCEAWEEILMQMDSRLTKFVQEKPTTTSVQDEFMHLLLWGKASAELQTLLMNQLTVKGLKKLGQSIESSYSSIQKLVISHLQSGSESLLYHLSELKGMASWKQKYEPLGLDAAGIEDAITAVGSFILKANELLQVIDSSMKNFKAFFRWLYVAMLRMTEDHVLPELNKMTQKDITFVAEFLTEHFNEAPDLYNRKGKYFNVERVGQYLKDEDDDLVSPPNTEGNQWYDFLQNSTHLKESPLLFPYYPRKSLHFVKRRMENVIDQCLQKPADVIGRSMNQAICIPLYKDARSMDCARRLLKFPFLWNNKTSNLHYLLFTILEDSVYKMCILRRHTDISQSVSNGLIGIKFGSFTSASADKVRRSSYSCLDAQFYDDETVTVILKDSMGREGRDRILVQLSLSLVYNSEDSDEYEFTGSYSTRLDEQGSIIPTRTMHFEKHWRLLESMRAQYVAGNGLRKVSCVLSSNLRHVRVFEMDIDDEWEIDESSDDEEEAGGKPVKIKEEVLSESETEAHQDAAALDPDVVIKVEKLDPELDS.

Tyr-469 is subject to Phosphotyrosine. Positions 755–788 are disordered; sequence DESSDDEEEAGGKPVKIKEEVLSESETEAHQDAA. Residues Ser-757 and Ser-758 each carry the phosphoserine modification. Positions 770–785 are enriched in basic and acidic residues; that stretch reads KIKEEVLSESETEAHQ. A Glycyl lysine isopeptide (Lys-Gly) (interchain with G-Cter in SUMO2) cross-link involves residue Lys-772. Phosphoserine occurs at positions 777 and 779. Lys-797 is covalently cross-linked (Glycyl lysine isopeptide (Lys-Gly) (interchain with G-Cter in SUMO2)).

Belongs to the APC4 family. In terms of assembly, the mammalian APC/C is composed at least of 14 distinct subunits ANAPC1, ANAPC2, CDC27/APC3, ANAPC4, ANAPC5, CDC16/APC6, ANAPC7, CDC23/APC8, ANAPC10, ANAPC11, CDC26/APC12, ANAPC13, ANAPC15 and ANAPC16 that assemble into a complex of at least 19 chains with a combined molecular mass of around 1.2 MDa; APC/C interacts with FZR1 and FBXO5. In the context of the APC/C complex, directly interacts with UBE2S. Interacts with FBXO43.

Its subcellular location is the nucleus. It participates in protein modification; protein ubiquitination. In terms of biological role, component of the anaphase promoting complex/cyclosome (APC/C), a cell cycle-regulated E3 ubiquitin ligase that controls progression through mitosis and the G1 phase of the cell cycle. The APC/C complex acts by mediating ubiquitination and subsequent degradation of target proteins: it mainly mediates the formation of 'Lys-11'-linked polyubiquitin chains and, to a lower extent, the formation of 'Lys-48'- and 'Lys-63'-linked polyubiquitin chains. The APC/C complex catalyzes assembly of branched 'Lys-11'-/'Lys-48'-linked branched ubiquitin chains on target proteins. The protein is Anaphase-promoting complex subunit 4 (Anapc4) of Mus musculus (Mouse).